Here is a 493-residue protein sequence, read N- to C-terminus: Glycerol kinase (493 aa).

Residue threonine 11 coordinates ADP. ATP contacts are provided by threonine 11, threonine 12, and serine 13. Sn-glycerol 3-phosphate is bound at residue threonine 11. ADP is bound at residue arginine 15. 4 residues coordinate sn-glycerol 3-phosphate: arginine 80, glutamate 81, tyrosine 132, and aspartate 241. 5 residues coordinate glycerol: arginine 80, glutamate 81, tyrosine 132, aspartate 241, and glutamine 242. ADP contacts are provided by threonine 263 and glycine 306. Residues threonine 263, glycine 306, glutamine 310, and glycine 408 each coordinate ATP. Glycine 408 is a binding site for ADP.

This sequence belongs to the FGGY kinase family.

The enzyme catalyses glycerol + ATP = sn-glycerol 3-phosphate + ADP + H(+). The protein operates within polyol metabolism; glycerol degradation via glycerol kinase pathway; sn-glycerol 3-phosphate from glycerol: step 1/1. Its activity is regulated as follows. Inhibited by fructose 1,6-bisphosphate (FBP). Key enzyme in the regulation of glycerol uptake and metabolism. Catalyzes the phosphorylation of glycerol to yield sn-glycerol 3-phosphate. In Cereibacter sphaeroides (strain ATCC 17023 / DSM 158 / JCM 6121 / CCUG 31486 / LMG 2827 / NBRC 12203 / NCIMB 8253 / ATH 2.4.1.) (Rhodobacter sphaeroides), this protein is Glycerol kinase.